The primary structure comprises 367 residues: MAVIKIDTSQYDAQLSEKEQRIAAQFQRFGVDKLEVFSSEPINYRQRAEFRVWHDGDDLFHIMFDQQTKDKIRVDSFDPAAPLVGEVMQVMIDNLKSCEILRRKLFQIDYLSTLSGEILVSLLYHKPLDEHWLSEINTLKEKLSSKYKIDFIGRARKQKEMLGDDYVTERLNVNGQELIYQQVENSFTQPNAKVNIKMLEWAQDLCKPLKNDLLELYCGNGNFSIALAGSFNKVLATEISKSSVHSAQYNIAQNKVDNLDIIRMSSEEFTQAMNGERSFSRLEGIDLNSYNCQTILVDPPRAGMDTLTCDLVANYESIIYISCNPETLERDLDHLTRTHEVKRFAIFDQFPYTHHIESGVFLQKKNT.

The S-adenosyl-L-methionine site is built by Gln189, Tyr217, Asn222, Glu238, and Asp298. The Nucleophile role is filled by Cys323. Residue Glu357 is the Proton acceptor of the active site.

Belongs to the class I-like SAM-binding methyltransferase superfamily. RNA M5U methyltransferase family. TrmA subfamily.

It carries out the reaction uridine(54) in tRNA + S-adenosyl-L-methionine = 5-methyluridine(54) in tRNA + S-adenosyl-L-homocysteine + H(+). The enzyme catalyses uridine(341) in tmRNA + S-adenosyl-L-methionine = 5-methyluridine(341) in tmRNA + S-adenosyl-L-homocysteine + H(+). Its function is as follows. Dual-specificity methyltransferase that catalyzes the formation of 5-methyluridine at position 54 (m5U54) in all tRNAs, and that of position 341 (m5U341) in tmRNA (transfer-mRNA). The sequence is that of tRNA/tmRNA (uracil-C(5))-methyltransferase from Pseudoalteromonas translucida (strain TAC 125).